We begin with the raw amino-acid sequence, 251 residues long: Cathelicidin-B1 (251 aa).

The first 20 residues, 1-20 (MGRMWASEVLLLLLLGSSRA), serve as a signal peptide directing secretion. Residues 21–211 (VTPGLDVSTA…ELRCRPLRPQ (191 aa)) constitute a propeptide that is removed on maturation. Residues 29–109 (TAPGLDGSIP…TITPKQDGSI (81 aa)) form a disordered region. 2 disulfides stabilise this stretch: C172–C181 and C189–C205.

Belongs to the cathelicidin family. In terms of tissue distribution, detected in bursa of Fabricius, in filamentous structures surrounding the basal and lateral surfaces of bursal M cells (at protein level). Detected in bursa of Fabricius, in secretory enterocytes of the interfollicular bursal epithelium, but not in M cells.

It localises to the secreted. Has potent antimicrobial activity against Gram-positive and Gram-negative bacteria (in vitro). May play a role in the innate immune response. The chain is Cathelicidin-B1 (CATHB1) from Gallus gallus (Chicken).